We begin with the raw amino-acid sequence, 122 residues long: S-adenosylmethionine decarboxylase proenzyme (122 aa).

The active-site Schiff-base intermediate with substrate; via pyruvic acid is serine 63. At serine 63 the chain carries Pyruvic acid (Ser); by autocatalysis. Histidine 68 (proton acceptor; for processing activity) is an active-site residue. The Proton donor; for catalytic activity role is filled by cysteine 83.

Belongs to the prokaryotic AdoMetDC family. Type 1 subfamily. In terms of assembly, heterotetramer of two alpha and two beta chains arranged as a dimer of alpha/beta heterodimers. Requires pyruvate as cofactor. Is synthesized initially as an inactive proenzyme. Formation of the active enzyme involves a self-maturation process in which the active site pyruvoyl group is generated from an internal serine residue via an autocatalytic post-translational modification. Two non-identical subunits are generated from the proenzyme in this reaction, and the pyruvate is formed at the N-terminus of the alpha chain, which is derived from the carboxyl end of the proenzyme. The post-translation cleavage follows an unusual pathway, termed non-hydrolytic serinolysis, in which the side chain hydroxyl group of the serine supplies its oxygen atom to form the C-terminus of the beta chain, while the remainder of the serine residue undergoes an oxidative deamination to produce ammonia and the pyruvoyl group blocking the N-terminus of the alpha chain.

It catalyses the reaction S-adenosyl-L-methionine + H(+) = S-adenosyl 3-(methylsulfanyl)propylamine + CO2. It functions in the pathway amine and polyamine biosynthesis; S-adenosylmethioninamine biosynthesis; S-adenosylmethioninamine from S-adenosyl-L-methionine: step 1/1. In terms of biological role, catalyzes the decarboxylation of S-adenosylmethionine to S-adenosylmethioninamine (dcAdoMet), the propylamine donor required for the synthesis of the polyamines spermine and spermidine from the diamine putrescine. This Methanococcus maripaludis (strain C5 / ATCC BAA-1333) protein is S-adenosylmethionine decarboxylase proenzyme.